The primary structure comprises 677 residues: Methionine--tRNA ligase (677 aa).

The 'HIGH' region signature appears at 15-25; it reads PYANGSIHLGH. Zn(2+) contacts are provided by Cys-146, Cys-149, Cys-159, and Cys-162. The 'KMSKS' region motif lies at 333–337; that stretch reads KMSKS. Position 336 (Lys-336) interacts with ATP. The region spanning 575–677 is the tRNA-binding domain; sequence DFAKVDLRVA…DGAKPGQQVK (103 aa).

Belongs to the class-I aminoacyl-tRNA synthetase family. MetG type 1 subfamily. As to quaternary structure, homodimer. It depends on Zn(2+) as a cofactor.

It localises to the cytoplasm. It catalyses the reaction tRNA(Met) + L-methionine + ATP = L-methionyl-tRNA(Met) + AMP + diphosphate. In terms of biological role, is required not only for elongation of protein synthesis but also for the initiation of all mRNA translation through initiator tRNA(fMet) aminoacylation. The chain is Methionine--tRNA ligase from Salmonella schwarzengrund (strain CVM19633).